The following is a 179-amino-acid chain: Large ribosomal subunit protein uL5 (179 aa).

The protein belongs to the universal ribosomal protein uL5 family. As to quaternary structure, part of the 50S ribosomal subunit; part of the 5S rRNA/L5/L18/L25 subcomplex. Contacts the 5S rRNA and the P site tRNA. Forms a bridge to the 30S subunit in the 70S ribosome.

Functionally, this is one of the proteins that bind and probably mediate the attachment of the 5S RNA into the large ribosomal subunit, where it forms part of the central protuberance. In the 70S ribosome it contacts protein S13 of the 30S subunit (bridge B1b), connecting the 2 subunits; this bridge is implicated in subunit movement. Contacts the P site tRNA; the 5S rRNA and some of its associated proteins might help stabilize positioning of ribosome-bound tRNAs. The polypeptide is Large ribosomal subunit protein uL5 (Klebsiella pneumoniae (strain 342)).